Consider the following 353-residue polypeptide: Photosystem II D2 protein (353 aa).

T2 is modified (N-acetylthreonine). T2 carries the post-translational modification Phosphothreonine. The helical transmembrane segment at C41–T61 threads the bilayer. A chlorophyll a-binding site is contributed by H118. Residues G125 to P141 form a helical membrane-spanning segment. The pheophytin a site is built by Q130 and N143. A helical transmembrane segment spans residues V153–S166. H198 provides a ligand contact to chlorophyll a. A helical transmembrane segment spans residues A208 to D228. H215 and F262 together coordinate a plastoquinone. Position 215 (H215) interacts with Fe cation. H269 lines the Fe cation pocket. A helical transmembrane segment spans residues G279 to R295.

The protein belongs to the reaction center PufL/M/PsbA/D family. PSII is composed of 1 copy each of membrane proteins PsbA, PsbB, PsbC, PsbD, PsbE, PsbF, PsbH, PsbI, PsbJ, PsbK, PsbL, PsbM, PsbT, PsbX, PsbY, PsbZ, Psb30/Ycf12, at least 3 peripheral proteins of the oxygen-evolving complex and a large number of cofactors. It forms dimeric complexes. The cofactor is The D1/D2 heterodimer binds P680, chlorophylls that are the primary electron donor of PSII, and subsequent electron acceptors. It shares a non-heme iron and each subunit binds pheophytin, quinone, additional chlorophylls, carotenoids and lipids. There is also a Cl(-1) ion associated with D1 and D2, which is required for oxygen evolution. The PSII complex binds additional chlorophylls, carotenoids and specific lipids..

It is found in the plastid membrane. The enzyme catalyses 2 a plastoquinone + 4 hnu + 2 H2O = 2 a plastoquinol + O2. Photosystem II (PSII) is a light-driven water:plastoquinone oxidoreductase that uses light energy to abstract electrons from H(2)O, generating O(2) and a proton gradient subsequently used for ATP formation. It consists of a core antenna complex that captures photons, and an electron transfer chain that converts photonic excitation into a charge separation. The D1/D2 (PsbA/PsbD) reaction center heterodimer binds P680, the primary electron donor of PSII as well as several subsequent electron acceptors. D2 is needed for assembly of a stable PSII complex. The polypeptide is Photosystem II D2 protein (Cuscuta exaltata (Tall dodder)).